The primary structure comprises 68 residues: MSLIGSEVKPFKADAFKAGKFVTVTDDTLKGKWSVVFFYPADFTFVCPTELEDLAENYAEFQRLGVEI.

The region spanning 2-68 is the Thioredoxin domain; it reads SLIGSEVKPF…AEFQRLGVEI (67 aa). The active-site Cysteine sulfenic acid (-SOH) intermediate is the Cys47.

The protein belongs to the peroxiredoxin family. AhpC/Prx1 subfamily. In terms of assembly, homodimer; disulfide-linked, upon oxidation. 5 homodimers assemble to form a ring-like decamer.

It localises to the cytoplasm. The enzyme catalyses a hydroperoxide + NADH + H(+) = an alcohol + NAD(+) + H2O. In terms of biological role, thiol-specific peroxidase that catalyzes the reduction of hydrogen peroxide and organic hydroperoxides to water and alcohols, respectively. Plays a role in cell protection against oxidative stress by detoxifying peroxides. This is Alkyl hydroperoxide reductase C (ahpC) from Rhodospirillum rubrum.